A 426-amino-acid polypeptide reads, in one-letter code: Transcription factor bHLH60 (426 aa).

Composition is skewed to polar residues over residues 117-137 and 148-172; these read QNGN…SSAN and TDSS…QNNR. The disordered stretch occupies residues 117–201; that stretch reads QNGNISGETP…SSEENEKLPY (85 aa). Basic and acidic residues predominate over residues 191-200; the sequence is KSSEENEKLP. One can recognise a bHLH domain in the interval 210 to 307; it reads QATDSHSLAE…DEIINHVQSL (98 aa). The segment at 367–398 is disordered; it reads HRQLQQPPTQQWPFDGLNQPVWGREEDQAHGN.

In terms of assembly, homodimer. In terms of tissue distribution, expressed constitutively in roots, leaves, stems, and flowers.

The protein localises to the nucleus. The polypeptide is Transcription factor bHLH60 (BHLH60) (Arabidopsis thaliana (Mouse-ear cress)).